A 284-amino-acid chain; its full sequence is Pantothenate synthetase (284 aa).

Residue 30–37 (MGALHDGH) participates in ATP binding. His-37 (proton donor) is an active-site residue. Gln-61 lines the (R)-pantoate pocket. Residue Gln-61 coordinates beta-alanine. ATP is bound at residue 147-150 (GEKD). Gln-153 serves as a coordination point for (R)-pantoate. ATP contacts are provided by residues Val-176 and 184–187 (KSSR).

Belongs to the pantothenate synthetase family. Homodimer.

Its subcellular location is the cytoplasm. The enzyme catalyses (R)-pantoate + beta-alanine + ATP = (R)-pantothenate + AMP + diphosphate + H(+). It participates in cofactor biosynthesis; (R)-pantothenate biosynthesis; (R)-pantothenate from (R)-pantoate and beta-alanine: step 1/1. Functionally, catalyzes the condensation of pantoate with beta-alanine in an ATP-dependent reaction via a pantoyl-adenylate intermediate. This chain is Pantothenate synthetase, found in Chloroherpeton thalassium (strain ATCC 35110 / GB-78).